The chain runs to 147 residues: Endoribonuclease YbeY (147 aa).

3 residues coordinate Zn(2+): histidine 108, histidine 112, and histidine 118.

This sequence belongs to the endoribonuclease YbeY family. The cofactor is Zn(2+).

The protein localises to the cytoplasm. Single strand-specific metallo-endoribonuclease involved in late-stage 70S ribosome quality control and in maturation of the 3' terminus of the 16S rRNA. The polypeptide is Endoribonuclease YbeY (Sulfurovum sp. (strain NBC37-1)).